Reading from the N-terminus, the 166-residue chain is NAD(P)H-quinone oxidoreductase subunit I, chloroplastic (166 aa).

4Fe-4S ferredoxin-type domains lie at 55–84 and 95–124; these read GRIHFEFDKCIACEVCVRVCPIDLPVVDWK and LNYSIDFGICIFCGNCVEYCPTNCLSMTEE. Cysteine 64, cysteine 67, cysteine 70, cysteine 74, cysteine 104, cysteine 107, cysteine 110, and cysteine 114 together coordinate [4Fe-4S] cluster.

Belongs to the complex I 23 kDa subunit family. In terms of assembly, NDH is composed of at least 16 different subunits, 5 of which are encoded in the nucleus. [4Fe-4S] cluster serves as cofactor.

The protein resides in the plastid. It localises to the chloroplast thylakoid membrane. The enzyme catalyses a plastoquinone + NADH + (n+1) H(+)(in) = a plastoquinol + NAD(+) + n H(+)(out). The catalysed reaction is a plastoquinone + NADPH + (n+1) H(+)(in) = a plastoquinol + NADP(+) + n H(+)(out). Its function is as follows. NDH shuttles electrons from NAD(P)H:plastoquinone, via FMN and iron-sulfur (Fe-S) centers, to quinones in the photosynthetic chain and possibly in a chloroplast respiratory chain. The immediate electron acceptor for the enzyme in this species is believed to be plastoquinone. Couples the redox reaction to proton translocation, and thus conserves the redox energy in a proton gradient. The sequence is that of NAD(P)H-quinone oxidoreductase subunit I, chloroplastic from Oblivia mikanioides (Salmea mikanioides).